We begin with the raw amino-acid sequence, 246 residues long: Zinc import ATP-binding protein ZnuC (246 aa).

Positions 24–244 constitute an ABC transporter domain; sequence LKIENLALAY…TLGEIFSSYI (221 aa). ATP is bound at residue 56-63; the sequence is GPNGGGKT.

It belongs to the ABC transporter superfamily. Zinc importer (TC 3.A.1.15.5) family. In terms of assembly, the complex is composed of two ATP-binding proteins (ZnuC), two transmembrane proteins (ZnuB) and a solute-binding protein (ZnuA).

The protein localises to the cell membrane. The catalysed reaction is Zn(2+)(out) + ATP(in) + H2O(in) = Zn(2+)(in) + ADP(in) + phosphate(in) + H(+)(in). Part of the ABC transporter complex ZnuABC involved in zinc import. Responsible for energy coupling to the transport system. The polypeptide is Zinc import ATP-binding protein ZnuC (Wolbachia sp. subsp. Brugia malayi (strain TRS)).